Here is a 710-residue protein sequence, read N- to C-terminus: NAD(P)H-quinone oxidoreductase subunit 5, chloroplastic (710 aa).

Helical transmembrane passes span 9 to 29 (WIIPFVPLLVPMLIGAGLLIF), 40 to 60 (WSFQSVLLLSIVMAFSIYLSI), 89 to 109 (IDPLTSIMSILVTTVGILVLI), 125 to 145 (FTYMSFFCAAMLGLVTSSNFI), 147 to 167 (IYIFWELVGLCSYLLIGFWFT), 185 to 205 (GDFGLLLGILGFYWITGSFEF), 221 to 241 (VNLLFVTLCAALLFVGAIAKS), 258 to 278 (TPISALIHAATLVAAGIFLVA), 280 to 300 (LLPLFLVIPYIMYFISLIGII), 327 to 347 (LGYMMVALGMGSYRSALFHLI), 354 to 374 (ALLFLAAGSVIHSMETIIGYS), 396 to 416 (GAFLLGTLSLCGIPPLACFWS), 425 to 445 (WLYSPIFALIAWGTVGLTAFY), 519 to 539 (MLFPQILLCFVTFVIGFLGIP), 571 to 591 (FLKHTVISGGIAYCGIFIAFL), 657 to 676 (SFDLRIIDQIFNCFAFLSFI), and 689 to 709 (IPFYLFFYFFFVSIFIFLFYK).

The protein belongs to the complex I subunit 5 family. NDH is composed of at least 16 different subunits, 5 of which are encoded in the nucleus.

The protein resides in the plastid. Its subcellular location is the chloroplast thylakoid membrane. The enzyme catalyses a plastoquinone + NADH + (n+1) H(+)(in) = a plastoquinol + NAD(+) + n H(+)(out). It catalyses the reaction a plastoquinone + NADPH + (n+1) H(+)(in) = a plastoquinol + NADP(+) + n H(+)(out). NDH shuttles electrons from NAD(P)H:plastoquinone, via FMN and iron-sulfur (Fe-S) centers, to quinones in the photosynthetic chain and possibly in a chloroplast respiratory chain. The immediate electron acceptor for the enzyme in this species is believed to be plastoquinone. Couples the redox reaction to proton translocation, and thus conserves the redox energy in a proton gradient. The protein is NAD(P)H-quinone oxidoreductase subunit 5, chloroplastic (ndhF) of Ipomoea purpurea (Common morning glory).